Consider the following 293-residue polypeptide: Signal recognition particle receptor FtsY (293 aa).

GTP is bound by residues 93-100 (GVNGAGKT), 175-179 (DTAGR), and 239-242 (TKLD).

The protein belongs to the GTP-binding SRP family. FtsY subfamily. Part of the signal recognition particle protein translocation system, which is composed of SRP and FtsY. SRP is a ribonucleoprotein composed of Ffh and a 4.5S RNA molecule.

Its subcellular location is the cell inner membrane. The protein resides in the cytoplasm. It carries out the reaction GTP + H2O = GDP + phosphate + H(+). In terms of biological role, involved in targeting and insertion of nascent membrane proteins into the cytoplasmic membrane. Acts as a receptor for the complex formed by the signal recognition particle (SRP) and the ribosome-nascent chain (RNC). Interaction with SRP-RNC leads to the transfer of the RNC complex to the Sec translocase for insertion into the membrane, the hydrolysis of GTP by both Ffh and FtsY, and the dissociation of the SRP-FtsY complex into the individual components. The polypeptide is Signal recognition particle receptor FtsY (Helicobacter pylori (strain ATCC 700392 / 26695) (Campylobacter pylori)).